A 160-amino-acid polypeptide reads, in one-letter code: Cytochrome b6-f complex subunit 4 (160 aa).

The next 3 helical transmembrane spans lie at Leu-36–Val-56, Leu-95–Glu-115, and Leu-131–Ile-151.

Belongs to the cytochrome b family. PetD subfamily. In terms of assembly, the 4 large subunits of the cytochrome b6-f complex are cytochrome b6, subunit IV (17 kDa polypeptide, petD), cytochrome f and the Rieske protein, while the 4 small subunits are petG, petL, petM and petN. The complex functions as a dimer.

Its subcellular location is the plastid. It localises to the chloroplast thylakoid membrane. Functionally, component of the cytochrome b6-f complex, which mediates electron transfer between photosystem II (PSII) and photosystem I (PSI), cyclic electron flow around PSI, and state transitions. In Emiliania huxleyi (Coccolithophore), this protein is Cytochrome b6-f complex subunit 4.